The following is a 274-amino-acid chain: NADPH-dependent 7-cyano-7-deazaguanine reductase (274 aa).

80–82 (VES) contributes to the substrate binding site. 82 to 83 (SK) contributes to the NADPH binding site. Catalysis depends on Cys-181, which acts as the Thioimide intermediate. Asp-188 (proton donor) is an active-site residue. 220–221 (HE) serves as a coordination point for substrate. 249–250 (RG) provides a ligand contact to NADPH.

This sequence belongs to the GTP cyclohydrolase I family. QueF type 2 subfamily. In terms of assembly, homodimer.

It localises to the cytoplasm. The enzyme catalyses 7-aminomethyl-7-carbaguanine + 2 NADP(+) = 7-cyano-7-deazaguanine + 2 NADPH + 3 H(+). The protein operates within tRNA modification; tRNA-queuosine biosynthesis. Its function is as follows. Catalyzes the NADPH-dependent reduction of 7-cyano-7-deazaguanine (preQ0) to 7-aminomethyl-7-deazaguanine (preQ1). This is NADPH-dependent 7-cyano-7-deazaguanine reductase from Burkholderia lata (strain ATCC 17760 / DSM 23089 / LMG 22485 / NCIMB 9086 / R18194 / 383).